The primary structure comprises 182 residues: Hypoxanthine/guanine phosphoribosyltransferase (182 aa).

Belongs to the purine/pyrimidine phosphoribosyltransferase family. Archaeal HPRT subfamily. As to quaternary structure, homodimer.

The protein resides in the cytoplasm. It carries out the reaction IMP + diphosphate = hypoxanthine + 5-phospho-alpha-D-ribose 1-diphosphate. It catalyses the reaction GMP + diphosphate = guanine + 5-phospho-alpha-D-ribose 1-diphosphate. The protein operates within purine metabolism; IMP biosynthesis via salvage pathway; IMP from hypoxanthine: step 1/1. Catalyzes a salvage reaction resulting in the formation of IMP that is energically less costly than de novo synthesis. In Methanospirillum hungatei JF-1 (strain ATCC 27890 / DSM 864 / NBRC 100397 / JF-1), this protein is Hypoxanthine/guanine phosphoribosyltransferase.